Reading from the N-terminus, the 512-residue chain is Oxalate--CoA ligase (512 aa).

ATP is bound at residue 168 to 179 (HTSGTTGRPKVV). Ser283 and Ser284 each carry phosphoserine. The short motif at 381–429 (DRFFRTGDEGKLDKDGYVFITGRIKELVNRGGEKISPAEIDAVLMQHPD) is the FACS element. A Microbody targeting signal motif is present at residues 510–512 (AKL).

The protein belongs to the ATP-dependent AMP-binding enzyme family.

Its subcellular location is the peroxisome matrix. The protein resides in the peroxisome membrane. The catalysed reaction is oxalate + ATP + CoA = oxalyl-CoA + AMP + diphosphate. Functionally, catalyzes the first step in a degradation pathway of oxalate to CO(2) to protect the cell against the harmful effects of oxalate derived from endogenous processes or an environmental sources. The sequence is that of Oxalate--CoA ligase (pcs60) from Schizosaccharomyces pombe (strain 972 / ATCC 24843) (Fission yeast).